A 132-amino-acid polypeptide reads, in one-letter code: Histone H2B.9 (132 aa).

Residues 1 to 11 (MAPKAEKKPAE) are compositionally biased toward basic and acidic residues. Positions 1–41 (MAPKAEKKPAEKAPAPKAEKKIAKEGGTSEIVKKKKKTKKS) are disordered. Residue A2 is modified to N,N,N-trimethylalanine; alternate. Residue A2 is modified to N,N-dimethylalanine; alternate. An N-methylalanine; alternate modification is found at A2. Residue K4 is modified to N6-methyllysine. N6-acetyllysine is present on residues K7, K12, K20, and K21. K128 is covalently cross-linked (Glycyl lysine isopeptide (Lys-Gly) (interchain with G-Cter in ubiquitin)).

This sequence belongs to the histone H2B family. As to quaternary structure, the nucleosome is a histone octamer containing two molecules each of H2A, H2B, H3 and H4 assembled in one H3-H4 heterotetramer and two H2A-H2B heterodimers. The octamer wraps approximately 147 bp of DNA. Can be acetylated to form H2BK6ac, H2BK33ac and H2BK34ac. Post-translationally, monoubiquitinated by BRE1 to form H2BK143ub1 and deubiquitinated by UBP26. Required for heterochromatic histone H3 di- and trimethylation at H3K4me. May give a specific tag for epigenetic transcriptional activation.

It is found in the nucleus. It localises to the chromosome. In terms of biological role, core component of nucleosome. Nucleosomes wrap and compact DNA into chromatin, limiting DNA accessibility to the cellular machineries which require DNA as a template. Histones thereby play a central role in transcription regulation, DNA repair, DNA replication and chromosomal stability. DNA accessibility is regulated via a complex set of post-translational modifications of histones, also called histone code, and nucleosome remodeling. This is Histone H2B.9 from Arabidopsis thaliana (Mouse-ear cress).